The primary structure comprises 520 residues: Cyclin-L2 (520 aa).

A2 is modified (N-acetylalanine). Cyclin-like regions lie at residues 83–185 and 198–282; these read ELIQ…RVLK and KIIV…KILQ. Positions 316–520 are disordered; that stretch reads LPGGTQVLDG…DHPGHSRHRR (205 aa). 4 positions are modified to phosphoserine: S330, S338, S348, and S351. Over residues 357 to 367 the composition is skewed to basic and acidic residues; the sequence is RRLEGAKKAKA. The residue at position 369 (S369) is a Phosphoserine. Over residues 376 to 390 the composition is skewed to basic and acidic residues; that stretch reads KGRESRSRSRSREQS. An RS region spans residues 385–423; the sequence is RSREQSYSRSPSRSASPKRRKSDSGSTSGGSKSQSRSRS. Low complexity predominate over residues 408–436; the sequence is SGSTSGGSKSQSRSRSRSDSPPRQAPRSA. A compositionally biased stretch (basic and acidic residues) spans 441-454; it reads SEIRGSRKSKDCKY. Positions 456 to 471 are enriched in basic residues; it reads QKPHKSRSRSSSRSRS. 2 stretches are compositionally biased toward basic and acidic residues: residues 472–481 and 489–514; these read RSRERADNPG and YYRDQRRERSRSYERTGRRYERDHPG.

This sequence belongs to the cyclin family. Cyclin L subfamily. As to quaternary structure, interacts with CDK11A, CDK11B, CDK12, CDK13 and POLR2A, the hyperphosphorylated C-terminal domain (CTD) of RNA polymerase II. May form a ternary complex with CDK11B and casein kinase II (CKII). Interacts with pre-mRNA-splicing factors, including at least SRSF1, SRSF2 AND SRSF7/SLU7. In terms of tissue distribution, widely expressed.

It localises to the nucleus speckle. Its subcellular location is the nucleus. The protein localises to the nucleoplasm. Functionally, involved in pre-mRNA splicing. May induce cell death, possibly by acting on the transcription and RNA processing of apoptosis-related factors. This chain is Cyclin-L2 (CCNL2), found in Homo sapiens (Human).